We begin with the raw amino-acid sequence, 214 residues long: Nodulation protein A (214 aa).

It belongs to the NodA family.

Its subcellular location is the cytoplasm. In terms of biological role, N-acyltransferase required for nodulation. Acts in the production of a small, heat-stable compound (Nod) that stimulates mitosis in various plant protoplasts. The chain is Nodulation protein A from Methylobacterium nodulans (strain LMG 21967 / CNCM I-2342 / ORS 2060).